Here is a 93-residue protein sequence, read N- to C-terminus: Corticostatin 1 (93 aa).

An N-terminal signal peptide occupies residues 1–19 (MRTLILLAAILLAALQAQA). Positions 20–59 (ELFSVNVDEVLDQQQPGSDQDLVIHLTGEESSALQVPDTK) are excised as a propeptide. 3 disulfides stabilise this stretch: Cys62/Cys90, Cys64/Cys79, and Cys69/Cys89.

It belongs to the alpha-defensin family.

The protein localises to the secreted. In terms of biological role, microbicidal activity and inhibits corticotropin (ACTH) stimulated corticosterone production. This is Corticostatin 1 from Oryctolagus cuniculus (Rabbit).